Here is a 699-residue protein sequence, read N- to C-terminus: Glycine--tRNA ligase beta subunit (699 aa).

The protein belongs to the class-II aminoacyl-tRNA synthetase family. In terms of assembly, tetramer of two alpha and two beta subunits.

It is found in the cytoplasm. It carries out the reaction tRNA(Gly) + glycine + ATP = glycyl-tRNA(Gly) + AMP + diphosphate. This Bradyrhizobium diazoefficiens (strain JCM 10833 / BCRC 13528 / IAM 13628 / NBRC 14792 / USDA 110) protein is Glycine--tRNA ligase beta subunit.